We begin with the raw amino-acid sequence, 565 residues long: Formate--tetrahydrofolate ligase (565 aa).

An ATP-binding site is contributed by 73–80; that stretch reads TPAGEGKS.

Belongs to the formate--tetrahydrofolate ligase family.

It carries out the reaction (6S)-5,6,7,8-tetrahydrofolate + formate + ATP = (6R)-10-formyltetrahydrofolate + ADP + phosphate. Its pathway is one-carbon metabolism; tetrahydrofolate interconversion. In Arthrobacter sp. (strain FB24), this protein is Formate--tetrahydrofolate ligase.